The sequence spans 134 residues: Small ribosomal subunit protein bS6 (134 aa).

The segment at 99–134 (EPSAMMQKRDRDERKDRERGRRRDEDGFSGDRNEEN) is disordered. Basic and acidic residues predominate over residues 105–134 (QKRDRDERKDRERGRRRDEDGFSGDRNEEN).

Belongs to the bacterial ribosomal protein bS6 family.

In terms of biological role, binds together with bS18 to 16S ribosomal RNA. This is Small ribosomal subunit protein bS6 from Methylobacterium nodulans (strain LMG 21967 / CNCM I-2342 / ORS 2060).